The primary structure comprises 30 residues: Trypsin inhibitor 4 (30 aa).

3 cysteine pairs are disulfide-bonded: Cys3–Cys20, Cys10–Cys22, and Cys16–Cys28.

The protein belongs to the protease inhibitor I7 (squash-type serine protease inhibitor) family.

It is found in the secreted. Functionally, inhibits trypsin; probably participates in a plant defense mechanism. In Momordica charantia (Bitter gourd), this protein is Trypsin inhibitor 4.